Consider the following 134-residue polypeptide: Large ribosomal subunit protein uL16c (134 aa).

The protein belongs to the universal ribosomal protein uL16 family. As to quaternary structure, part of the 50S ribosomal subunit.

The protein resides in the plastid. It is found in the chloroplast. This chain is Large ribosomal subunit protein uL16c, found in Pinus thunbergii (Japanese black pine).